Here is a 285-residue protein sequence, read N- to C-terminus: MTAHTIDGLALSRQLRSALAQRAAALTARGHQPGLAVILVGEDPASAIYVRNKIRACQDNGLRSVLEKYTANLSQAALLERIAALNADPGVHGILVQMPLPKHIDPHRVTEAIASTKDVDGYSVLSAGALLAGLDGFRPCTPYGCMKLIESTGQAIAGRHAVIVGRSQTVGKPMALLLLQANATVTLCHSATPDLGYHTRQADIVVAAVGRARMLTAEMVKPGAIVIDVGINRQADGKLCGDVDFDRVKQVAGWITPVPGGVGPMTITMLLVNTMQATERSAANP.

Residues 165 to 167, Ser190, and Ile231 contribute to the NADP(+) site; that span reads GRS.

It belongs to the tetrahydrofolate dehydrogenase/cyclohydrolase family. Homodimer.

It carries out the reaction (6R)-5,10-methylene-5,6,7,8-tetrahydrofolate + NADP(+) = (6R)-5,10-methenyltetrahydrofolate + NADPH. It catalyses the reaction (6R)-5,10-methenyltetrahydrofolate + H2O = (6R)-10-formyltetrahydrofolate + H(+). The protein operates within one-carbon metabolism; tetrahydrofolate interconversion. Functionally, catalyzes the oxidation of 5,10-methylenetetrahydrofolate to 5,10-methenyltetrahydrofolate and then the hydrolysis of 5,10-methenyltetrahydrofolate to 10-formyltetrahydrofolate. The chain is Bifunctional protein FolD from Verminephrobacter eiseniae (strain EF01-2).